The sequence spans 331 residues: MNAPHMNDTTADAATLDATAAPAGRPALTRREQKDAYENNKLFKRIVRQVGQAIGDFNMIEQGDKVMVCLSGGKDSYAMLDVLLRLRERAPIDFDIVAVNLDQKQPGFPEHVLPEYLKQVGVPFHIENQDTYSIVKRLVPEGKTTCSLCSRLRRGILYRVAGELGATKIALGHHRDDIVQTLLLNMFYGGKLKGMPPKLQSDDGKNIVIRPLAYVKETDLEKYAELREFPIIPCNLCGSQPNLKRAEMKALIREWDKRFPGRVENMFNALAKVVPSHLMDTTLYPFQSLRASGVADPQGDIAFDEEPCASGDDTAAPGGAQPISIVQFDDL.

Residues 1–31 (MNAPHMNDTTADAATLDATAAPAGRPALTRR) are disordered. Low complexity predominate over residues 8-23 (DTTADAATLDATAAPA). The PP-loop motif signature appears at 71-76 (SGGKDS). 3 residues coordinate [4Fe-4S] cluster: cysteine 146, cysteine 149, and cysteine 237.

The protein belongs to the TtcA family. In terms of assembly, homodimer. The cofactor is Mg(2+). Requires [4Fe-4S] cluster as cofactor.

It localises to the cytoplasm. The enzyme catalyses cytidine(32) in tRNA + S-sulfanyl-L-cysteinyl-[cysteine desulfurase] + AH2 + ATP = 2-thiocytidine(32) in tRNA + L-cysteinyl-[cysteine desulfurase] + A + AMP + diphosphate + H(+). It participates in tRNA modification. Its function is as follows. Catalyzes the ATP-dependent 2-thiolation of cytidine in position 32 of tRNA, to form 2-thiocytidine (s(2)C32). The sulfur atoms are provided by the cysteine/cysteine desulfurase (IscS) system. This is tRNA-cytidine(32) 2-sulfurtransferase from Burkholderia lata (strain ATCC 17760 / DSM 23089 / LMG 22485 / NCIMB 9086 / R18194 / 383).